A 386-amino-acid polypeptide reads, in one-letter code: Probable pectin lyase E (386 aa).

The first 16 residues, 1-16 (MKTAVLSLFLALQTYA), serve as a signal peptide directing secretion. C77 and C101 form a disulfide bridge. Residue N124 is glycosylated (N-linked (GlcNAc...) asparagine). R251 is an active-site residue. C326 and C334 are joined by a disulfide.

Belongs to the polysaccharide lyase 1 family.

The protein resides in the secreted. It carries out the reaction Eliminative cleavage of (1-&gt;4)-alpha-D-galacturonan methyl ester to give oligosaccharides with 4-deoxy-6-O-methyl-alpha-D-galact-4-enuronosyl groups at their non-reducing ends.. Functionally, pectinolytic enzymes consist of four classes of enzymes: pectin lyase, polygalacturonase, pectin methylesterase and rhamnogalacturonase. Among pectinolytic enzymes, pectin lyase is the most important in depolymerization of pectin, since it cleaves internal glycosidic bonds of highly methylated pectins. This Aspergillus fumigatus (strain CBS 144.89 / FGSC A1163 / CEA10) (Neosartorya fumigata) protein is Probable pectin lyase E (pelE).